The primary structure comprises 191 residues: RNA pyrophosphohydrolase (191 aa).

In terms of domain architecture, Nudix hydrolase spans 6–149 (GYRLNVGIIL…KREVYRQALS (144 aa)). The short motif at 38 to 59 (GGIKVDEDPDAAMFRELYEEVG) is the Nudix box element. The interval 162-191 (GAQAVSDAGGTATRQIPVATEPSGPSSSQR) is disordered.

This sequence belongs to the Nudix hydrolase family. RppH subfamily. Requires a divalent metal cation as cofactor.

Functionally, accelerates the degradation of transcripts by removing pyrophosphate from the 5'-end of triphosphorylated RNA, leading to a more labile monophosphorylated state that can stimulate subsequent ribonuclease cleavage. This chain is RNA pyrophosphohydrolase, found in Methylococcus capsulatus (strain ATCC 33009 / NCIMB 11132 / Bath).